The primary structure comprises 435 residues: uncharacterized protein (435 aa).

At S47 the chain carries Phosphoserine. Disordered stretches follow at residues 174-210 (LKKK…DDED) and 290-372 (KAEA…EDNK). Acidic residues predominate over residues 195 to 210 (NEEDEEDEEDEEDDED). The segment covering 290–304 (KAEATGEAHSKDVSA) has biased composition (basic and acidic residues). Positions 308-318 (SANTTTSFDET) are enriched in polar residues. Basic and acidic residues-rich tracts occupy residues 322–340 (EDEK…KEAN) and 347–361 (VADR…KVND).

The protein localises to the cytoplasm. This is an uncharacterized protein from Saccharomyces cerevisiae (strain ATCC 204508 / S288c) (Baker's yeast).